Reading from the N-terminus, the 684-residue chain is Chaperone protein HtpG (684 aa).

The a; substrate-binding stretch occupies residues 1–329 (MSKKGTIGVT…SPDIPLNVSR (329 aa)). Positions 330–548 (SYLQSDANVK…FMRRMRDMAQ (219 aa)) are b. A c region spans residues 549–684 (LQPGMSFYGE…EFIRRSQRLL (136 aa)).

It belongs to the heat shock protein 90 family. As to quaternary structure, homodimer.

It localises to the cytoplasm. Molecular chaperone. Has ATPase activity. This Porphyromonas gingivalis (strain ATCC 33277 / DSM 20709 / CIP 103683 / JCM 12257 / NCTC 11834 / 2561) protein is Chaperone protein HtpG.